A 45-amino-acid polypeptide reads, in one-letter code: Thymosin beta (45 aa).

Residues 1–45 are disordered; it reads MADKPNMTEITSFDKTKLRKTETQEKNPLPTKETIEQERQGESTP. 2 stretches are compositionally biased toward basic and acidic residues: residues 12–25 and 33–45; these read SFDK…ETQE and ETIE…ESTP.

This sequence belongs to the thymosin beta family.

It localises to the cytoplasm. Its subcellular location is the cytoskeleton. Plays an important role in the organization of the cytoskeleton. Binds to and sequesters actin monomers (G actin) and therefore inhibits actin polymerization. This is Thymosin beta (tmsb) from Danio rerio (Zebrafish).